A 100-amino-acid polypeptide reads, in one-letter code: UPF0213 protein YhbQ (100 aa).

Positions 2 to 77 (TPWFLYLIRT…KQLTKRQKER (76 aa)) constitute a GIY-YIG domain.

Belongs to the UPF0213 family.

The protein is UPF0213 protein YhbQ of Escherichia coli O139:H28 (strain E24377A / ETEC).